The sequence spans 65 residues: Small ribosomal subunit protein bS21 (65 aa).

Over residues 33–42 (RRREHYEKPS) the composition is skewed to basic and acidic residues. A disordered region spans residues 33-65 (RRREHYEKPSVKRKRKEAARLRKLQKMAREANN). Residues 43–58 (VKRKRKEAARLRKLQK) show a composition bias toward basic residues.

Belongs to the bacterial ribosomal protein bS21 family.

In Herpetosiphon aurantiacus (strain ATCC 23779 / DSM 785 / 114-95), this protein is Small ribosomal subunit protein bS21.